The primary structure comprises 868 residues: Translation initiation factor IF-2 (868 aa).

2 disordered regions span residues 158-178 (VKEE…DELT) and 200-269 (KKEE…KYRE). The segment covering 200–209 (KKEEVKPEKV) has biased composition (basic and acidic residues). Over residues 249–260 (RGGRSKFKKKKG) the composition is skewed to basic residues. Positions 368–537 (GRAPVVTIMG…LLQSEVLELK (170 aa)) constitute a tr-type G domain. The segment at 377–384 (GHVDHGKT) is G1. 377-384 (GHVDHGKT) provides a ligand contact to GTP. The interval 402 to 406 (GITQH) is G2. Residues 423-426 (DTPG) form a G3 region. GTP is bound by residues 423–427 (DTPGH) and 477–480 (NKMD). Residues 477-480 (NKMD) are G4. Positions 513–515 (SAK) are G5.

This sequence belongs to the TRAFAC class translation factor GTPase superfamily. Classic translation factor GTPase family. IF-2 subfamily.

Its subcellular location is the cytoplasm. One of the essential components for the initiation of protein synthesis. Protects formylmethionyl-tRNA from spontaneous hydrolysis and promotes its binding to the 30S ribosomal subunits. Also involved in the hydrolysis of GTP during the formation of the 70S ribosomal complex. This Legionella pneumophila (strain Lens) protein is Translation initiation factor IF-2.